A 543-amino-acid polypeptide reads, in one-letter code: Sodium/glucose cotransporter (543 aa).

14 consecutive transmembrane segments (helical) span residues 10 to 30 (FIDIMVFAIYVAIIIGVGLWV), 45 to 65 (FLAGKSLPWWAVGASLIAANI), 79 to 99 (SIGLAIASYEWMSAITLIIVG), 129 to 149 (ILAVFWISLYIFVNLTSVLYL), 156 to 176 (TILGIPLMYSILGLALFALVY), 193 to 213 (VFFLVLGGFMTTYMAVSFIGG), 246 to 266 (LPGIAVLIGGLWVANLYYWGF), 287 to 307 (IVFAAFLKLIVPFLVVLPGIA), 345 to 365 (FLPVGVKGVVFAALAAAIVSS), 401 to 421 (TAAVVALIIACLIAPMLGGIG), 427 to 447 (IQEYTGLVSPGILAVFLLGLF), 455 to 475 (GAIIGVVASIPFALFLKFMPL), 483 to 503 (MLYTLLFTMVVIAFTSLSTSI), and 523 to 543 (SFNIAAYGIMIVLAVLYTLFW).

Its subcellular location is the cell membrane. Actively transports glucose into cells by Na(+) cotransport. This Vibrio parahaemolyticus protein is Sodium/glucose cotransporter (sglT).